We begin with the raw amino-acid sequence, 323 residues long: Leucine-rich repeat-containing protein 46 (323 aa).

LRR repeat units follow at residues 49–70 (DLET…ERLR), 71–92 (NIHS…ACIT), 93–114 (SLRF…LDLQ), and 115–135 (YLQF…DELP). The LRRCT domain maps to 146-188 (NPCTNQDGYRKMVIGALPLLLDLDKQPILERWTSDEEDKSSDE). A Phosphothreonine modification is found at threonine 178. Serine 179, serine 185, and serine 186 each carry phosphoserine. Residues 203–228 (RGFFKDLEQELHQHQERRQQAALTEH) are a coiled coil. Residues 252–323 (DCSPAVTEEP…TKSTNKRGTK (72 aa)) are disordered. Over residues 269-290 (ATSSTQMASSSKKQVPRNQKGS) the composition is skewed to polar residues. Residues 297–310 (ALAATASKTSLAAA) are compositionally biased toward low complexity. At serine 303 the chain carries Phosphoserine.

The protein localises to the cell projection. It localises to the cilium. The protein resides in the flagellum. Its function is as follows. Required for normal spermatogenesis and male fertility. Plays an important role in sperm flagellum biogenesis. This is Leucine-rich repeat-containing protein 46 (Lrrc46) from Rattus norvegicus (Rat).